A 211-amino-acid chain; its full sequence is MHFLTQELSFPNTNESTRDGLLAIGGDLSTQRLLLAYENGIFPWFEEGEPIMWWSPRQRMVLFFDALVVSHSMRNVINKNIFKVTFNKAFREVIQNCQSVKREGQHGTWITNEMIESYCKLHELGKAISVEIWQNDTLVGGLYGVDMFPVFCGESMFSKVSNASKMAFISLADYLKTNHYNLLDCQIYNDHLNSLGCREIPRDEFLKFLKK.

The protein belongs to the L/F-transferase family.

Its subcellular location is the cytoplasm. The enzyme catalyses N-terminal L-lysyl-[protein] + L-leucyl-tRNA(Leu) = N-terminal L-leucyl-L-lysyl-[protein] + tRNA(Leu) + H(+). The catalysed reaction is N-terminal L-arginyl-[protein] + L-leucyl-tRNA(Leu) = N-terminal L-leucyl-L-arginyl-[protein] + tRNA(Leu) + H(+). It carries out the reaction L-phenylalanyl-tRNA(Phe) + an N-terminal L-alpha-aminoacyl-[protein] = an N-terminal L-phenylalanyl-L-alpha-aminoacyl-[protein] + tRNA(Phe). Functionally, functions in the N-end rule pathway of protein degradation where it conjugates Leu, Phe and, less efficiently, Met from aminoacyl-tRNAs to the N-termini of proteins containing an N-terminal arginine or lysine. The protein is Leucyl/phenylalanyl-tRNA--protein transferase of Flavobacterium psychrophilum (strain ATCC 49511 / DSM 21280 / CIP 103535 / JIP02/86).